Consider the following 498-residue polypeptide: ATP synthase subunit beta, chloroplastic (498 aa).

Position 6 is a phosphothreonine (T6). At S13 the chain carries Phosphoserine. 172–179 (GGAGVGKT) contacts ATP.

Belongs to the ATPase alpha/beta chains family. In terms of assembly, F-type ATPases have 2 components, CF(1) - the catalytic core - and CF(0) - the membrane proton channel. CF(1) has five subunits: alpha(3), beta(3), gamma(1), delta(1), epsilon(1). CF(0) has four main subunits: a(1), b(1), b'(1) and c(9-12).

The protein resides in the plastid. The protein localises to the chloroplast thylakoid membrane. It catalyses the reaction ATP + H2O + 4 H(+)(in) = ADP + phosphate + 5 H(+)(out). In terms of biological role, produces ATP from ADP in the presence of a proton gradient across the membrane. The catalytic sites are hosted primarily by the beta subunits. The polypeptide is ATP synthase subunit beta, chloroplastic (Arabis hirsuta (Hairy rock-cress)).